The primary structure comprises 239 residues: 1-(5-phosphoribosyl)-5-[(5-phosphoribosylamino)methylideneamino] imidazole-4-carboxamide isomerase (239 aa).

Asp-8 serves as the catalytic Proton acceptor. Asp-130 acts as the Proton donor in catalysis.

It belongs to the HisA/HisF family.

Its subcellular location is the cytoplasm. The enzyme catalyses 1-(5-phospho-beta-D-ribosyl)-5-[(5-phospho-beta-D-ribosylamino)methylideneamino]imidazole-4-carboxamide = 5-[(5-phospho-1-deoxy-D-ribulos-1-ylimino)methylamino]-1-(5-phospho-beta-D-ribosyl)imidazole-4-carboxamide. It participates in amino-acid biosynthesis; L-histidine biosynthesis; L-histidine from 5-phospho-alpha-D-ribose 1-diphosphate: step 4/9. This Lachnoclostridium phytofermentans (strain ATCC 700394 / DSM 18823 / ISDg) (Clostridium phytofermentans) protein is 1-(5-phosphoribosyl)-5-[(5-phosphoribosylamino)methylideneamino] imidazole-4-carboxamide isomerase.